The sequence spans 257 residues: Dihydroorotate dehydrogenase B (NAD(+)), electron transfer subunit (257 aa).

One can recognise an FAD-binding FR-type domain in the interval 2-102; it reads IGRERMTVVS…LGPLGHGFPL (101 aa). Residues 53 to 56, 70 to 72, and 77 to 78 each bind FAD; these read RPLS, IYR, and GT. [2Fe-2S] cluster contacts are provided by Cys-221, Cys-226, Cys-229, and Cys-244.

The protein belongs to the PyrK family. Heterotetramer of 2 PyrK and 2 PyrD type B subunits. [2Fe-2S] cluster serves as cofactor. It depends on FAD as a cofactor.

It functions in the pathway pyrimidine metabolism; UMP biosynthesis via de novo pathway; orotate from (S)-dihydroorotate (NAD(+) route): step 1/1. Its function is as follows. Responsible for channeling the electrons from the oxidation of dihydroorotate from the FMN redox center in the PyrD type B subunit to the ultimate electron acceptor NAD(+). The polypeptide is Dihydroorotate dehydrogenase B (NAD(+)), electron transfer subunit (Geobacillus thermodenitrificans (strain NG80-2)).